The primary structure comprises 356 residues: 3-dehydroquinate synthase (356 aa).

NAD(+)-binding positions include Glu-71 to Lys-76, Gly-105 to Asp-109, Thr-129 to Ser-130, Lys-142, and Lys-151. Positions 184, 247, and 264 each coordinate Zn(2+).

The protein belongs to the sugar phosphate cyclases superfamily. Dehydroquinate synthase family. Co(2+) serves as cofactor. It depends on Zn(2+) as a cofactor. NAD(+) is required as a cofactor.

The protein resides in the cytoplasm. It carries out the reaction 7-phospho-2-dehydro-3-deoxy-D-arabino-heptonate = 3-dehydroquinate + phosphate. Its pathway is metabolic intermediate biosynthesis; chorismate biosynthesis; chorismate from D-erythrose 4-phosphate and phosphoenolpyruvate: step 2/7. In terms of biological role, catalyzes the conversion of 3-deoxy-D-arabino-heptulosonate 7-phosphate (DAHP) to dehydroquinate (DHQ). This is 3-dehydroquinate synthase from Lactococcus lactis subsp. cremoris (strain SK11).